Consider the following 215-residue polypeptide: Large ribosomal subunit protein uL3 (215 aa).

Glutamine 156 is subject to N5-methylglutamine.

It belongs to the universal ribosomal protein uL3 family. In terms of assembly, part of the 50S ribosomal subunit. Forms a cluster with proteins L14 and L19. Methylated by PrmB.

In terms of biological role, one of the primary rRNA binding proteins, it binds directly near the 3'-end of the 23S rRNA, where it nucleates assembly of the 50S subunit. The sequence is that of Large ribosomal subunit protein uL3 from Xylella fastidiosa (strain M23).